The primary structure comprises 219 residues: Guanylate kinase (219 aa).

Positions 15–194 constitute a Guanylate kinase-like domain; the sequence is GLMFVLSSPS…AFAEVQSILK (180 aa). Position 22-29 (22-29) interacts with ATP; the sequence is SPSGAGKT.

The protein belongs to the guanylate kinase family.

The protein localises to the cytoplasm. The catalysed reaction is GMP + ATP = GDP + ADP. In terms of biological role, essential for recycling GMP and indirectly, cGMP. The protein is Guanylate kinase of Bradyrhizobium diazoefficiens (strain JCM 10833 / BCRC 13528 / IAM 13628 / NBRC 14792 / USDA 110).